The sequence spans 615 residues: Dihydroxy-acid dehydratase (615 aa).

Aspartate 81 lines the Mg(2+) pocket. Cysteine 122 lines the [2Fe-2S] cluster pocket. Mg(2+) contacts are provided by aspartate 123 and lysine 124. Lysine 124 carries the N6-carboxylysine modification. Cysteine 193 serves as a coordination point for [2Fe-2S] cluster. Mg(2+) is bound at residue glutamate 489. Serine 515 acts as the Proton acceptor in catalysis.

This sequence belongs to the IlvD/Edd family. As to quaternary structure, homodimer. The cofactor is [2Fe-2S] cluster. It depends on Mg(2+) as a cofactor.

The enzyme catalyses (2R)-2,3-dihydroxy-3-methylbutanoate = 3-methyl-2-oxobutanoate + H2O. It carries out the reaction (2R,3R)-2,3-dihydroxy-3-methylpentanoate = (S)-3-methyl-2-oxopentanoate + H2O. Its pathway is amino-acid biosynthesis; L-isoleucine biosynthesis; L-isoleucine from 2-oxobutanoate: step 3/4. The protein operates within amino-acid biosynthesis; L-valine biosynthesis; L-valine from pyruvate: step 3/4. In terms of biological role, functions in the biosynthesis of branched-chain amino acids. Catalyzes the dehydration of (2R,3R)-2,3-dihydroxy-3-methylpentanoate (2,3-dihydroxy-3-methylvalerate) into 2-oxo-3-methylpentanoate (2-oxo-3-methylvalerate) and of (2R)-2,3-dihydroxy-3-methylbutanoate (2,3-dihydroxyisovalerate) into 2-oxo-3-methylbutanoate (2-oxoisovalerate), the penultimate precursor to L-isoleucine and L-valine, respectively. The chain is Dihydroxy-acid dehydratase from Pseudomonas syringae pv. syringae (strain B728a).